Consider the following 323-residue polypeptide: Mortality factor 4-like protein 1 (323 aa).

One can recognise a Tudor-knot domain in the interval 12-62 (QEGERVLCFHGPLLYEAKCVKVAIKDKQVKYFIHYSGWNKNWDEWVPESRV). A disordered region spans residues 77 to 143 (QKANQEQYAE…RKKRARVDPT (67 aa)). Residues 94 to 227 (PGKKTSGLQQ…VAGIKEYFNV (134 aa)) are sufficient for interaction with SIN3A. Lys104 bears the N6-acetyllysine mark. Residues 125–191 (STSETPQPPR…FYLPAKKNVD (67 aa)) form an interaction with RB1-1 region. The tract at residues 149–303 (TFMNRVEVKV…FLKYLAKNSA (155 aa)) is sufficient for interaction with PHF12. The MRG domain maps to 152–323 (NRVEVKVKIP…APPEYHRKAV (172 aa)). Residues 284–305 (LALLLNYLHDFLKYLAKNSATL) form an interaction with RB1-2 region.

As to quaternary structure, component of the NuA4 histone acetyltransferase complex which contains the catalytic subunit KAT5/TIP60 and the subunits EP400, TRRAP/PAF400, BRD8/SMAP, EPC1, DMAP1/DNMAP1, RUVBL1/TIP49, RUVBL2, ING3, actin, ACTL6A/BAF53A, MORF4L1/MRG15, MORF4L2/MRGX, MRGBP, YEATS4/GAS41, VPS72/YL1 and MEAF6. The NuA4 complex interacts with MYC and the adenovirus E1A protein. MORF4L1 may also participate in the formation of NuA4 related complexes which lack the KAT5/TIP60 catalytic subunit, but which include the SWI/SNF related protein SRCAP. Component of the mSin3A histone deacetylase complex, which includes SIN3A, HDAC2, ARID4B, MORF4L1, RBBP4/RbAp48, and RBBP7/RbAp46. May also interact with PHF12 and one or more as yet undefined members of the TLE (transducin-like enhancer of split) family of transcriptional repressors. Component of the SIN3B complex, which includes SIN3B, HDAC2 or HDAC1, PHF12 and MORF4L1. Interacts with RB1 and KAT8. Interacts with the N-terminus of MRFAP1. Found in a complex composed of MORF4L1, MRFAP1 and RB1. Interacts with the entire BRCA complex, which contains BRCA1, PALB2, BRCA2 and RAD51. Interacts with PALB2. Forms a complex with MSL1 and NUPR1.

It is found in the nucleus. In terms of biological role, component of the NuA4 histone acetyltransferase (HAT) complex which is involved in transcriptional activation of select genes principally by acetylation of nucleosomal histones H4 and H2A. This modification may both alter nucleosome - DNA interactions and promote interaction of the modified histones with other proteins which positively regulate transcription. This complex may be required for the activation of transcriptional programs associated with oncogene and proto-oncogene mediated growth induction, tumor suppressor mediated growth arrest and replicative senescence, apoptosis, and DNA repair. The NuA4 complex ATPase and helicase activities seem to be, at least in part, contributed by the association of RUVBL1 and RUVBL2 with EP400. NuA4 may also play a direct role in DNA repair when directly recruited to sites of DNA damage. As part of the SIN3B complex represses transcription and counteracts the histone acetyltransferase activity of EP300 through the recognition H3K27ac marks by PHF12 and the activity of the histone deacetylase HDAC2. SIN3B complex is recruited downstream of the constitutively active genes transcriptional start sites through interaction with histones and mitigates histone acetylation and RNA polymerase II progression within transcribed regions contributing to the regulation of transcription. Required for homologous recombination repair (HRR) and resistance to mitomycin C (MMC). Involved in the localization of PALB2, BRCA2 and RAD51, but not BRCA1, to DNA-damage foci. In Rattus norvegicus (Rat), this protein is Mortality factor 4-like protein 1 (Morf4l1).